The primary structure comprises 153 residues: Hsp90 co-chaperone HCH1 (153 aa).

It belongs to the AHA1 family. Monomer. Interacts with HSP82.

The protein localises to the cytoplasm. Its subcellular location is the nucleus. Co-chaperone that binds to the molecular chaperone HSP82 and stimulates its ATPase activity. Although not essential, it confers thermotolerance when intracellular levels of HSP82 are limiting. The sequence is that of Hsp90 co-chaperone HCH1 (HCH1) from Saccharomyces cerevisiae (strain ATCC 204508 / S288c) (Baker's yeast).